The following is a 475-amino-acid chain: Glycogen synthase (475 aa).

Position 15 (Lys15) interacts with ADP-alpha-D-glucose.

Belongs to the glycosyltransferase 1 family. Bacterial/plant glycogen synthase subfamily.

The enzyme catalyses [(1-&gt;4)-alpha-D-glucosyl](n) + ADP-alpha-D-glucose = [(1-&gt;4)-alpha-D-glucosyl](n+1) + ADP + H(+). It participates in glycan biosynthesis; glycogen biosynthesis. Functionally, synthesizes alpha-1,4-glucan chains using ADP-glucose. In Anaeromyxobacter dehalogenans (strain 2CP-C), this protein is Glycogen synthase.